The primary structure comprises 81 residues: Large ribosomal subunit protein bL27 (81 aa).

A compositionally biased stretch (polar residues) spans 1–11 (MATSKSGGSSK). The interval 1-26 (MATSKSGGSSKNGRDSISKRLGVKRS) is disordered.

Belongs to the bacterial ribosomal protein bL27 family.

The polypeptide is Large ribosomal subunit protein bL27 (Borrelia turicatae (strain 91E135)).